A 62-amino-acid chain; its full sequence is uncharacterized protein (62 aa).

Belongs to the asfivirus C62L family.

This is an uncharacterized protein from African swine fever virus (strain Badajoz 1971 Vero-adapted) (Ba71V).